The following is a 304-amino-acid chain: Agmatinase (304 aa).

Mn(2+)-binding residues include histidine 126, aspartate 149, histidine 151, aspartate 153, aspartate 230, and aspartate 232.

The protein belongs to the arginase family. Agmatinase subfamily. Mn(2+) is required as a cofactor.

The catalysed reaction is agmatine + H2O = urea + putrescine. It participates in amine and polyamine biosynthesis; putrescine biosynthesis via agmatine pathway; putrescine from agmatine: step 1/1. Functionally, catalyzes the formation of putrescine from agmatine. The chain is Agmatinase from Edwardsiella ictaluri (strain 93-146).